A 434-amino-acid polypeptide reads, in one-letter code: Ribitol-5-phosphate xylosyltransferase 1 (434 aa).

The Cytoplasmic segment spans residues 1–7 (MRFFRRK). A helical; Signal-anchor for type II membrane protein transmembrane segment spans residues 8 to 28 (IAIIVILAYAIFSLYAAYNVF). The Extracellular segment spans residues 29-434 (FSKRVISRVH…VLEENFFKIT (406 aa)).

This sequence belongs to the TMEM5 family.

It is found in the golgi apparatus membrane. It catalyses the reaction 3-O-[Rib-ol-P-Rib-ol-P-3-beta-D-GalNAc-(1-&gt;3)-beta-D-GlcNAc-(1-&gt;4)-(O-6-P-alpha-D-Man)]-Thr-[protein] + UDP-alpha-D-xylose = 3-O-[beta-D-Xyl-(1-&gt;4)-Rib-ol-P-Rib-ol-P-3-beta-D-GalNAc-(1-&gt;3)-beta-D-GlcNAc-(1-&gt;4)-(O-6-P-alpha-D-Man)]-Thr-[protein] + UDP + H(+). It participates in protein modification; protein glycosylation. In terms of biological role, acts as a UDP-D-xylose:ribitol-5-phosphate beta1,4-xylosyltransferase, which catalyzes the transfer of UDP-D-xylose to ribitol 5-phosphate (Rbo5P) to form the Xylbeta1-4Rbo5P linkage on O-mannosyl glycan. Participates in the biosynthesis of the phosphorylated O-mannosyl trisaccharide (N-acetylgalactosamine-beta-3-N-acetylglucosamine-beta-4-(phosphate-6-)mannose), a carbohydrate structure present in alpha-dystroglycan (DAG1), which is required for binding laminin G-like domain-containing extracellular proteins with high affinity. The sequence is that of Ribitol-5-phosphate xylosyltransferase 1 (rxylt1) from Danio rerio (Zebrafish).